We begin with the raw amino-acid sequence, 127 residues long: Large ribosomal subunit protein bL17 (127 aa).

This sequence belongs to the bacterial ribosomal protein bL17 family. As to quaternary structure, part of the 50S ribosomal subunit. Contacts protein L32.

This chain is Large ribosomal subunit protein bL17, found in Ligilactobacillus salivarius (strain UCC118) (Lactobacillus salivarius).